The following is a 1120-amino-acid chain: MELFQAKDHYILQSGDNALWCSRKDGSMAVRPATDLLLAWNPVCLGLVEGIIGKMQLHVDLPLGLILIRQKALVGQLPGDHKVYKITKIVVIPLSEDEPQDLELELCKKHHFGINKPERITQSPDETKFLMKTLSQIKSNVGAPIKKKVKENKEKERLERRLLDELYKIFMDSDSFYYSLTYDLTNTVQRQGELGKSDQPLWKRVDDRFFWNKHMIKDLVDLQAPQVDFWVIPIIQGFVQVEELVVNYNESSDEERSSPETPLQEPTCVDDIHPRFTVALISRRSRHRAGMRYKRRGVDTDGHVANYVETEQLIHVHSHTLSFVQTRGSVPVFWSQAGYRYNPRPRIEKGERETMPYFASHFEKEVETYKKLVIINLVDQNGREKIIGDAYLKQVLLYNNPNLTYVSFDFHEHCRGMKFENVQTLTDAIYDIITDMRWAWVDQAGVICQQEGIFRVNCMDCLDRTNVVQAAIARVIMEQQLKKLGVMPPEQPLPLKCYRIYQVMWANNGDTISRQYAGTAALKGDFTRTGERKLAGVMKDGVNSANRYYLNRFRDAYRQAVIDLMMGHPVTEDLYSIFSKEKEHEEKEKESQRGAQEQVSLLLQTYMQLLLPDDEKFHGGWALIDCDPSLIDATHKDVDVLLLLSNSAYYVAYYDEEADKVNQYQRLSLEGLEKIEIGPEPTLFGKPKYCCMRLHYKNGETSGYFHTLRSVTRNPEDDGKDTLQCIAEMLRITKQAMGLDVQVVEKKLERRHSKPHEDIMGIQGKAVDQVLGSGLAQGKSFFLNKFSTLNQKVKQTKTNVNIGNFKPLGKLGTFSKPEVKVNFLKPNLHMNLWKSDSSLETHDSNTGSGALKDHGPHSEEISSDSDSYNSDEQPCSGSRENVDYVLPSCGIVASAPRLGSRSQSIGSVEIAVPSVIRVTGCDEKTMDSLSVAADQSPGAASEAEEAILIDFGTPIDVYCHQFVQDAKTKPIEVFEEVAPAPKPQGPQVPLAPDAKLGSSHSQNQLPRPSQLEVESNVHGANLLTVQPVGSATSCGSQKSLEGITGPSSADSNGSRVVSPFAKIRSSMVQVASLTQAGLTQGINFAVAKVQKSPEPDAVNETQENELRAMFTQCQTRIIQI.

One can recognise an SAC domain in the interval 167 to 518 (YKIFMDSDSF…GDTISRQYAG (352 aa)). The 168-residue stretch at 593-760 (RGAQEQVSLL…RHSKPHEDIM (168 aa)) folds into the hSac2 domain. Disordered regions lie at residues 837–881 (SSLE…SREN) and 979–1008 (PAPK…LPRP). The span at 851 to 860 (LKDHGPHSEE) shows a compositional bias: basic and acidic residues. Polar residues-rich tracts occupy residues 864–879 (DSDS…SGSR) and 998–1007 (SSHSQNQLPR).

It is found in the membrane. The protein resides in the clathrin-coated pit. Its subcellular location is the early endosome. The protein localises to the recycling endosome. It catalyses the reaction a myo-inositol phosphate + H2O = myo-inositol + phosphate. In terms of biological role, inositol 4-phosphatase which mainly acts on phosphatidylinositol 4-phosphate. May be functionally linked to OCRL, which converts phosphatidylinositol 4,5-bisphosphate to phosphatidylinositol, for a sequential dephosphorylation of phosphatidylinositol 4,5-bisphosphate at the 5 and 4 position of inositol, thus playing an important role in the endocytic recycling. The chain is Phosphatidylinositide phosphatase SAC2 from Danio rerio (Zebrafish).